The following is a 476-amino-acid chain: MEEDLIKRLEAAVTRLEGISSNGGGVVSLSRGGDFSSAAGIDIASSDPSILAYEDLISQCVGRALTAAEKIGGPVLDVTKIVAEAFASQKELLVRIKQTQKPDLAGLAGFLKPLNDVTMKANAMTEGKRSDFFNHLKAACDSLSALAWIAFTGKDCGMSMPIAHVEESWQMAEFYNNKVLVEYRNKDADHVEWAKALKELYLPGLREYVKSHYPLGPVWNASGKPASAPAKGPPGAPAPPPAPLFSAESSKPSSSSNQKQGMSAVFQQLSSGAVTSGLRKVTDDMKTKNRADRSGAVSAVEKETRTSKPAFSKTGPPKMELQMGRKWAVENQIGKKDLVISECDSKQSVYIYGCKDSVLQIQGKVNNITIDKCTKVGVVFTDVVAAFEIVNCNNVEVQCQGSAPTVSVDNTTGCQLYLNKDSLETAITTAKSSEINVMVPGATPDGDWVEHALPQQYNHVFTEGKFETTPVSHSGA.

Disordered stretches follow at residues 224-262 (KPASAPAKGPPGAPAPPPAPLFSAESSKPSSSSNQKQGM) and 277-319 (GLRK…PPKM). The span at 231–243 (KGPPGAPAPPPAP) shows a compositional bias: pro residues. Low complexity predominate over residues 246 to 256 (SAESSKPSSSS). Over residues 280-293 (KVTDDMKTKNRADR) the composition is skewed to basic and acidic residues. The C-CAP/cofactor C-like domain occupies 316-453 (PPKMELQMGR…PDGDWVEHAL (138 aa)).

It belongs to the CAP family. In terms of tissue distribution, expressed in roots, cotyledons, leaves, stems, flowers, pollen and shoots. Not detected in siliques.

In terms of biological role, actin monomer binding protein that accelerates the exchange of ADP for ATP. Regulates the pool of unpolymerized ATP-actin. Key intermediate between actin-depolymerizing factor (ADF)-mediated disassembly and the profilin-based nucleation and elongation machinery. The protein is Cyclase-associated protein 1 (CAP1) of Arabidopsis thaliana (Mouse-ear cress).